We begin with the raw amino-acid sequence, 81 residues long: CLAVATA3/ESR (CLE)-related protein 6 (81 aa).

The first 26 residues, 1–26, serve as a signal peptide directing secretion; that stretch reads MANLILKQSLIILLIIYSTPILSSQA. A hydroxyproline mark is found at Pro73 and Pro76. O-linked (Ara...) hydroxyproline glycosylation is present at Pro76.

This sequence belongs to the CLV3/ESR signal peptide family. In terms of processing, the O-glycosylation (arabinosylation) of the hydroxyproline Pro-76 enhances binding affinity of the CLE6p peptide for its receptor. Mostly expressed in roots, seedlings, stems and flowers, and, to a lower extent, in apex and siliques.

The protein localises to the secreted. It localises to the extracellular space. Its function is as follows. Extracellular signal peptide that regulates cell fate. This chain is CLAVATA3/ESR (CLE)-related protein 6, found in Arabidopsis thaliana (Mouse-ear cress).